We begin with the raw amino-acid sequence, 319 residues long: COP9 signalosome complex subunit 6 (319 aa).

Positions 33–166 constitute an MPN domain; that stretch reads VALHPLVILN…VSVYESVIDI (134 aa).

Belongs to the peptidase M67A family. CSN6 subfamily. As to quaternary structure, component of the CSN complex, probably composed of cops1, cops2, cops3, cops4, cops5, cops6, cops7, cops8 and cops9.

Its subcellular location is the cytoplasm. It localises to the nucleus. Functionally, component of the COP9 signalosome complex (CSN), a complex involved in various cellular and developmental processes. The CSN complex is an essential regulator of the ubiquitin (Ubl) conjugation pathway by mediating the deneddylation of the cullin subunits of E3 ligase complexes, leading to modify the Ubl ligase activity. The polypeptide is COP9 signalosome complex subunit 6 (cops6) (Xenopus tropicalis (Western clawed frog)).